We begin with the raw amino-acid sequence, 133 residues long: Small ribosomal subunit protein uS11 (133 aa).

This sequence belongs to the universal ribosomal protein uS11 family. As to quaternary structure, part of the 30S ribosomal subunit. Interacts with proteins S7 and S18. Binds to IF-3.

Its function is as follows. Located on the platform of the 30S subunit, it bridges several disparate RNA helices of the 16S rRNA. Forms part of the Shine-Dalgarno cleft in the 70S ribosome. The sequence is that of Small ribosomal subunit protein uS11 from Brevibacillus brevis (strain 47 / JCM 6285 / NBRC 100599).